We begin with the raw amino-acid sequence, 781 residues long: Isoquinoline 1-oxidoreductase subunit beta (781 aa).

As to quaternary structure, heterodimer of an alpha chain and a beta chain.

The enzyme catalyses isoquinoline + A + H2O = isoquinolin-1(2H)-one + AH2. Specific towards N-containing N-heterocyclic substrates, including isoquinoline, isoquinolin-5-ol, phthalazine and quinazoline. The polypeptide is Isoquinoline 1-oxidoreductase subunit beta (iorB) (Brevundimonas diminuta (Pseudomonas diminuta)).